The following is a 325-amino-acid chain: Glutarate 2-hydroxylase (325 aa).

Fe cation contacts are provided by His-160, Asp-162, and His-292.

It belongs to the glutarate hydroxylase family. As to quaternary structure, homotetramer. It depends on Fe(2+) as a cofactor.

It carries out the reaction glutarate + 2-oxoglutarate + O2 = (S)-2-hydroxyglutarate + succinate + CO2. The protein operates within amino-acid degradation. Its function is as follows. Acts as an alpha-ketoglutarate-dependent dioxygenase catalyzing hydroxylation of glutarate (GA) to L-2-hydroxyglutarate (L2HG). Functions in a L-lysine degradation pathway that proceeds via cadaverine, glutarate and L-2-hydroxyglutarate. The protein is Glutarate 2-hydroxylase of Salmonella typhimurium (strain SL1344).